Reading from the N-terminus, the 162-residue chain is 2-C-methyl-D-erythritol 2,4-cyclodiphosphate synthase (162 aa).

The a divalent metal cation site is built by D12 and H14. Residues 12 to 14 and 38 to 39 each bind 4-CDP-2-C-methyl-D-erythritol 2-phosphate; these read DVH and HS. H46 is an a divalent metal cation binding site. 4-CDP-2-C-methyl-D-erythritol 2-phosphate contacts are provided by residues 60 to 62, 65 to 69, F143, and R146; these read DIG and FPDTD.

Belongs to the IspF family. In terms of assembly, homotrimer. The cofactor is a divalent metal cation.

It carries out the reaction 4-CDP-2-C-methyl-D-erythritol 2-phosphate = 2-C-methyl-D-erythritol 2,4-cyclic diphosphate + CMP. It functions in the pathway isoprenoid biosynthesis; isopentenyl diphosphate biosynthesis via DXP pathway; isopentenyl diphosphate from 1-deoxy-D-xylulose 5-phosphate: step 4/6. Its function is as follows. Involved in the biosynthesis of isopentenyl diphosphate (IPP) and dimethylallyl diphosphate (DMAPP), two major building blocks of isoprenoid compounds. Catalyzes the conversion of 4-diphosphocytidyl-2-C-methyl-D-erythritol 2-phosphate (CDP-ME2P) to 2-C-methyl-D-erythritol 2,4-cyclodiphosphate (ME-CPP) with a corresponding release of cytidine 5-monophosphate (CMP). The polypeptide is 2-C-methyl-D-erythritol 2,4-cyclodiphosphate synthase (Azoarcus sp. (strain BH72)).